The sequence spans 293 residues: Small ribosomal subunit protein uS5 (293 aa).

The interval 1-56 (MADDAGAAGGPGGPGGPGMGNRGGFRGGFGSGIRGRGRGRGRGRGRGRGARGGKAE) is disordered. N-acetylalanine is present on A2. Over residues 7 to 34 (AAGGPGGPGGPGMGNRGGFRGGFGSGIR) the composition is skewed to gly residues. The segment covering 35–51 (GRGRGRGRGRGRGRGAR) has biased composition (basic residues). Glycyl lysine isopeptide (Lys-Gly) (interchain with G-Cter in ubiquitin) cross-links involve residues K54 and K58. The S5 DRBM domain maps to 102–165 (LKDEVLKIMP…ILAKLSIVPV (64 aa)). Phosphothreonine is present on T252. K263 carries the post-translational modification N6-acetyllysine. S264 carries the post-translational modification Phosphoserine. The residue at position 270 (T270) is a Phosphothreonine. N6-acetyllysine; alternate is present on K275. K275 participates in a covalent cross-link: Glycyl lysine isopeptide (Lys-Gly) (interchain with G-Cter in SUMO1); alternate. K275 is covalently cross-linked (Glycyl lysine isopeptide (Lys-Gly) (interchain with G-Cter in SUMO2); alternate). K275 is covalently cross-linked (Glycyl lysine isopeptide (Lys-Gly) (interchain with G-Cter in ubiquitin); alternate). S281 carries the post-translational modification Phosphoserine.

Belongs to the universal ribosomal protein uS5 family. Component of the small ribosomal subunit. Interacts with zinc finger protein ZNF277 (via zinc-finger domains); the interaction is direct; the interaction is extra-ribosomal. Interaction with ZNF277 competes with the binding of RPS2 to protein arginine methyltransferase PRMT3. Citrullinated by PADI4 in the Arg/Gly-rich region. In terms of processing, asymmetric arginine dimethylation by PRMT3 occurs at multiple sites in the Arg/Gly-rich region. Post-translationally, monoubiquitinated at Lys-54 and Lys-58 by RNF10 when a ribosome has stalled during translation, leading to its degradation by the proteasome. Deubiquitinated at Lys-54 and Lys-58 by USP10, preventing degradation by the proteasome and promoting 40S ribosome subunit recycling following ribosome dissociation.

Its subcellular location is the cytoplasm. The protein resides in the nucleus. It localises to the nucleolus. Its function is as follows. Component of the ribosome, a large ribonucleoprotein complex responsible for the synthesis of proteins in the cell. The small ribosomal subunit (SSU) binds messenger RNAs (mRNAs) and translates the encoded message by selecting cognate aminoacyl-transfer RNA (tRNA) molecules. The large subunit (LSU) contains the ribosomal catalytic site termed the peptidyl transferase center (PTC), which catalyzes the formation of peptide bonds, thereby polymerizing the amino acids delivered by tRNAs into a polypeptide chain. The nascent polypeptides leave the ribosome through a tunnel in the LSU and interact with protein factors that function in enzymatic processing, targeting, and the membrane insertion of nascent chains at the exit of the ribosomal tunnel. Plays a role in the assembly and function of the 40S ribosomal subunit. Mutations in this protein affects the control of translational fidelity. Involved in nucleolar processing of pre-18S ribosomal RNA and ribosome assembly. The chain is Small ribosomal subunit protein uS5 (RPS2) from Homo sapiens (Human).